Reading from the N-terminus, the 156-residue chain is Small ribosomal subunit protein uS7 (156 aa).

Belongs to the universal ribosomal protein uS7 family. Part of the 30S ribosomal subunit. Contacts proteins S9 and S11.

One of the primary rRNA binding proteins, it binds directly to 16S rRNA where it nucleates assembly of the head domain of the 30S subunit. Is located at the subunit interface close to the decoding center, probably blocks exit of the E-site tRNA. The protein is Small ribosomal subunit protein uS7 of Vibrio parahaemolyticus serotype O3:K6 (strain RIMD 2210633).